A 339-amino-acid polypeptide reads, in one-letter code: Ribosome biogenesis protein BRX1 homolog (339 aa).

Residues 1–34 (MSAYKRKRGSLPEVATNTKKAKKQLAGSEQEATA) form a disordered region. Positions 53-242 (ERVLIFSSRG…LIKIFKGSFG (190 aa)) constitute a Brix domain. The disordered stretch occupies residues 304-339 (AEEKPQVIETEPPAPKPKMKRKDKQFKRQRMAKKRM). The segment covering 320–339 (PKMKRKDKQFKRQRMAKKRM) has biased composition (basic residues).

This sequence belongs to the BRX1 family. Ubiquitous.

It is found in the nucleus. It localises to the nucleolus. Required for biogenesis of the 60S ribosomal subunit. This chain is Ribosome biogenesis protein BRX1 homolog (brix1), found in Xenopus laevis (African clawed frog).